Consider the following 154-residue polypeptide: MKCPFCTHPDTRVADSRLMEERNAVRRRRHCPNCGKRFGTLETAELKMPAVIGPDKKRSPFNAQRLRNDLTAAARKSALTPEQIDETVRLTEHRLYTSGQRDIPSAALADMVLKELLRQDTEAAVRFAALHKRFDNPADFASWLAQAVKTGGKA.

Residues 3 to 34 fold into a zinc finger; sequence CPFCTHPDTRVADSRLMEERNAVRRRRHCPNC. Residues 49-139 form the ATP-cone domain; the sequence is PAVIGPDKKR…LHKRFDNPAD (91 aa).

The protein belongs to the NrdR family. Zn(2+) is required as a cofactor.

Negatively regulates transcription of bacterial ribonucleotide reductase nrd genes and operons by binding to NrdR-boxes. This Neisseria meningitidis serogroup A / serotype 4A (strain DSM 15465 / Z2491) protein is Transcriptional repressor NrdR.